Consider the following 292-residue polypeptide: Techylectin-5A (292 aa).

The first 23 residues, 1 to 23 (MHNLRNILFVITLIGQKYGLTSS), serve as a signal peptide directing secretion. Glutamine 24 carries the post-translational modification Pyrrolidone carboxylic acid. The Fibrinogen C-terminal domain occupies 63–286 (PIVSPDPTDC…QVEMKIRPVE (224 aa)). Cysteine 72 and cysteine 103 are oxidised to a cystine. N-linked (GlcNAc...) asparagine glycosylation is found at asparagine 173, asparagine 198, and asparagine 214. 3 residues coordinate Ca(2+): aspartate 221, histidine 225, and threonine 227. An intrachain disulfide couples cysteine 229 to cysteine 242.

Multimeric. PubMed:10468566 and PubMed:11707569 are in disagreement about the nature of the multimer, PubMed:10468566 finds hexamers and octamers, the results in PubMed:11707569 suggest tetramers. Strongly expressed in heart and intestine, weakly expressed in hepatopancreas. Not found in hemocytes, stomach, nervous tissue or skeletal muscle.

The protein localises to the secreted. Functionally, lectin involved in innate immunity. Agglutinates all types of human erythrocytes, Gram-positive and Gram-negative bacteria. Has a stronger agglutinating activity towards Gram-negative bacteria than towards Gram-positive bacteria. Specifically recognizes acetyl group-containing substances on agglutinated cells. The hemagglutinating activity was inhibited by EDTA, acetyl group-containing mono- and disaccharides, N-acetyl derivatives of amino acids, other acetyl group-containing substances, propionamide and benzamide. Enhances the antimicrobial activity of big defensin against Gram-positive bacteria but not against Gram-negative bacteria. The polypeptide is Techylectin-5A (Tachypleus tridentatus (Japanese horseshoe crab)).